The primary structure comprises 347 residues: Phosphate acyltransferase (347 aa).

This sequence belongs to the PlsX family. Homodimer. Probably interacts with PlsY.

It is found in the cytoplasm. It catalyses the reaction a fatty acyl-[ACP] + phosphate = an acyl phosphate + holo-[ACP]. The protein operates within lipid metabolism; phospholipid metabolism. Catalyzes the reversible formation of acyl-phosphate (acyl-PO(4)) from acyl-[acyl-carrier-protein] (acyl-ACP). This enzyme utilizes acyl-ACP as fatty acyl donor, but not acyl-CoA. This chain is Phosphate acyltransferase, found in Dehalococcoides mccartyi (strain ATCC BAA-2100 / JCM 16839 / KCTC 5957 / BAV1).